A 954-amino-acid chain; its full sequence is Glycine dehydrogenase (decarboxylating) (954 aa).

Position 704 is an N6-(pyridoxal phosphate)lysine (Lys-704).

Belongs to the GcvP family. In terms of assembly, the glycine cleavage system is composed of four proteins: P, T, L and H. The cofactor is pyridoxal 5'-phosphate.

The catalysed reaction is N(6)-[(R)-lipoyl]-L-lysyl-[glycine-cleavage complex H protein] + glycine + H(+) = N(6)-[(R)-S(8)-aminomethyldihydrolipoyl]-L-lysyl-[glycine-cleavage complex H protein] + CO2. In terms of biological role, the glycine cleavage system catalyzes the degradation of glycine. The P protein binds the alpha-amino group of glycine through its pyridoxal phosphate cofactor; CO(2) is released and the remaining methylamine moiety is then transferred to the lipoamide cofactor of the H protein. The protein is Glycine dehydrogenase (decarboxylating) of Vibrio parahaemolyticus serotype O3:K6 (strain RIMD 2210633).